A 338-amino-acid polypeptide reads, in one-letter code: MSSNADTSQAVSAGTSVGATFGKVAVLMGGMSAEREISLMSGRGVLQALRSRGVDAHAFDPAERDISELKKDEFARCFIALHGRFGEDGTVQGALELLGIPYTGSGVMASSMAIDKVMTKRVMLAEGLPTPTYVLLRRGSYGSADVSAVPDKLGLPLIVKPAREGSSIGLTKVTERAGMADAVAQAEKLDADILCEQFISGDEVTCPVLGTGSEARALPVIRIVAPDGNYDYQNKYFTDTTQYLVPCGLPEGEEAVIQQLVLQAYRTLNCRGWARADVMIDKVTRKPYLLEINTSPGMTGHSLVPMSARAAGISYEDLCIEVLKTTALDHQSQGGGAS.

The region spanning 120–324 (KRVMLAEGLP…YEDLCIEVLK (205 aa)) is the ATP-grasp domain. An ATP-binding site is contributed by 150–205 (PDKLGLPLIVKPAREGSSIGLTKVTERAGMADAVAQAEKLDADILCEQFISGDEVT). Positions 277, 291, and 293 each coordinate Mg(2+).

Belongs to the D-alanine--D-alanine ligase family. It depends on Mg(2+) as a cofactor. Mn(2+) serves as cofactor.

The protein localises to the cytoplasm. The catalysed reaction is 2 D-alanine + ATP = D-alanyl-D-alanine + ADP + phosphate + H(+). It functions in the pathway cell wall biogenesis; peptidoglycan biosynthesis. Cell wall formation. In Polaromonas sp. (strain JS666 / ATCC BAA-500), this protein is D-alanine--D-alanine ligase.